The sequence spans 3790 residues: MSVIENVPVNTFRNYLNILNDSSSKDELKLKATQELSEHFEMIMQSPAYPSFLDNSLKIFMRILQDGEPQFIQENTMQHIRKLILEMIHRLPITESLRQHVKTIITMMLKILKTDNEENVLVCLRIIIELHKHFRPSFNSEIQLFLGFVKEIYTNLPNHLTSIFETSNDVWVTDLKDLNLEVLLSESYSVRTIHVEKALDSNSQQQIYNLLPRGILSLKVLQELPIIVVLMYQIYKNAVHQEVSEFIPLILTTINLQPTVTRRNSPQKEIYVEFMGAQIKTLSFLAYIVRIFQEVVIASSLSVTSGMLNLMKNCPKEAAHLRKELLIAARHIFATDLRQKFIPSIEQLFDEDLLIGKGVTLDSIRPLAYSTLADLAHHVRQSLNIDVLIKAVNLFSKNVHDESLAVGIQTMSCKLLLNLVDCLRHHSETEPQRSKALLSKLLKVFVKKFETIAKIQLPLIIQKCKGHAFSGALVNSSGNASLSHINAPDLKDDISNIQVSASGSQWIYSVNVAEFRSLVKTLVGGVKTITWGFFNSKFQLTDTKLANHEKIFGPEIVCSYIDLVYYAMEALDIYTINVNPNQQRTSGLISRSKEEKEVLEHFSGIFLMMHSQNFQEIFSTTINFLVERIYKNQSLQVIANSFLANPTTSPLFATVLVEYLLNKMEEMGSNLERSNLYLRLFKLVFGSVSLFPVENEQMLRPHLHKIVNRSMELALISEEPYNYFLLLRALFRSIGGGSHDLLYQEFLPLLPNLLEGLNRLQSGFHKQHMRDLFVELCLTVPVRLSSLLPYLPMLMDPLVSALNGSPTLISQGLRTLELCVDNLQPDFLYDHIQPVRAALMQALWKTLRNQDNAALVAFRVLGKFGGGNRKMMVEPQALSYIINDKPTISIVTYFQEYETPIDFPVDEAIKSAFRALGSNSTDQFYRRQSWEVIRCFLAAFISLDDEKHMLLKLFTHVDFVENKIMNWSTFQHKAGNETVRETHQTALIGMLVASATKDLRDSVCPVMAAVVRHYTMVAIAQQAGPFPQKGYQATHGIDPMILIDALASCMGHEEKELCKPGIACMGIILDTATNIMGNKDRACKLPIIQYLAEKMVSLCYDRPWYSKVGGCQAIQFLCKHMSLRALFQNLFNFLKAFMFVLMDLEGDVSNGAIEITKSYMKSMLEICLTPINECYKNIDLKDLQAKATYEVIHELVRHITSPNTIVREESMVLLKHIGTIQSKTVSEVMDPHKDVLADIIPPKKHLLRHQPANAQIGLMDGNTFCTTLEPRLFTIDLTNTYHKLFFHELLTLSEAEDATLAKLDCYKNVPNLIPLRTSALRALAACHYISDIGYKEKIINIIFKVMESDKSELQTTAFHCMKHFITGVTLEKEKVQSAMRPLLLKLGDHRNLSIPAIKRLSYFTQIFPQMFNEKLSEQILQHCSKIMEIFVSEYKSTSPNVNFFASSKGGEYEQKIVILIEMFFYISASVKYIEKLCQLVLKTEKNLMIEASSPYREALIKFLQRFPTETVDLFLTESLMIDPQWNRLFIYLLKHETGVSFRAVIKSSRYNNLIHYLNTHTEFPEALKYEIQHQAVLIIFTLMESDDQWIPTRQDIVDALKNCWQNYLSTLSSEDVLCDLWHLIGKILLHYFSNNTNDIELLFQLLRALCFRFIPDVYFLRDFLQHTVAQSFTVNWKRNAFFYFVENFNNSFLSEELKAKIITAVIIPCFAVSFDKGEGNKLIGAPPTPYQEDEKNIVSVFINKVFDPDKQYDDAVRIALLQLACLLVERASQHIHDGDANNKRQGNKLRRLMTFAWPCLLSKSSVDPTARYHGHLLLSHIIARLAIHKKIVLQVFHSLLKGHALEARSIVKQALDVLTPAMPLRMEDGNTMLTHWTKKIIVEEGHAMQQLFHILQLIIRHYKVYFPVRHQLVQHLINYMQRLGFPPTASIEHKKLAVDLAEVIIKWELHRIKDDRETKTDGTEEELIQESSVKRSGIDLVETRKKSFDIIRETTVQGVGSHTKPDDILRSIDKSYCDTVLNFLIRLACQVNDPQAPILSPGESLSRRCVMLLKMAMRPEIWPQPFDIKLNWLDKVLATVETPHHNLNNICTGIDFLTFLTTILSPDQLVSIIRPVQRGLSLCIIHQNTRIVRLMHMFLTRIMAIFPPDTQHKHEDLDLLYTAVSKMIAENLTSYEKSPQPNASSLFGTLMILKACTTNNASYIDRILVQFIRVLNHLTRDHINTIGGNTVISQSPDSNALPLELLVLSLELIKNRIFVMSVEIRKLFIGTILVSLIEKSTEVKIIKCIIKMLDEWIKTKEPNVMTQVPSIREKSALLVKLMQNVEKKFTDEIELNIQFLEIINFIYRDEILKQTELTNKLEGAFLNGLRFQNPNVRSKFFEILDSSMRRRLHDRLLYIICSQAWDTIGSHYWIKQCIELLILTANTMMQIQCSNEQFKIPSITSVIPVNSSETQENSFVSFLSSHSESFDIIQTVDDKDDVYDIDLNADRKEDCQQILPNRRVTLVELVYKQAEFLEANRNIRTDQMLVATSQLCHIDTQLAQSVWLSMFPRIWSIFTEDQRCNITKELIPFLSSGTNVNQKDCHPSTLNTFVESLTKCAPPIYIPPNLLAYLGKSHNLWHRAILVLEDMAVNQSMQSKDIDGGENQFSDLDVQQSNNIFDSLSKMYSSMHEEDLWAGLWLKFAHYPETNIAVSYEQMGFFEEAQGAYDLAMTKFKQDLSNGVVNTYVNSELLLWENHWMRCAKELNQWDILLDYAQTNKDKNMFLILESSWRVPDWNLMKIALAKTEQCYLKHYGFKINLYKGYLSILHQEERQTGNIERYVEIASSLCIREWRRLPNIVSHIHLPYLQASQQIMELHEASQIHQGLAQSRNNSLHDMKAIVKTWRNRLPIISDDLSHWSDIFTWRQHHYQIITQHLEQQSDQGSTMLGVHASAQAIISFGKIARKHNLTGVCQETLSRIYTIPSVPIVDCFQKIRQQVKCYLQMPSTSGKNEINEALEVIESTNLKYFTGEMNAEFYALKGLLLAQIGRSEEAGKSFSVAAQLHDGLTKAWAMWGDYMEQIFLKERKITLAVDALICYLQASRNQIESKTRKYIAKVLWFLSYDNNTKILISTLEKHVAGIPPSYWLPWIPQLLCCLEQFEGDVILNLLSQIGRLYPQAVYFPIRTLYLTLKIEQREKHKTAEQAVKSSCSNIDGTTLSFGRGASHGNIPSINPIKATPPMWRCSKVMQLQREVHPTILSSLEGIVDQMVWFRESWTEEVLRQLRQGLIKCYAIAFEKRDTVQHSTITPHTLHFVKKLGSTFGIGIENVPGSVTSSISNSAASESLARRAQVTFQDPVFQKMKEQFTNDFDFSKPGAMKLHNLISKLKTWIKVLETKVKKLPTSFLIEDKCRFLSNFSQKTAEVELPGELLIPLSSHYYVRIARFMPRVEIVQKNNTAARRLYIRGTNGKIYPYLVVLDSGLGDARREERVLQLKRMLNYYLEKQKETSRRFLNITVPRVVPISPQMRLAEDNPNSISLLKIFKKCCQSMQVDYDMPIVKYYDRLSEVQARGTPTTHTLLREIFSEIQWTMVPKTLLKHWALKTFLAATDFWHFRKMLTLQLALAFLCEHALNLTRLNADMMYLHQDSGLMNISYFKFDVNDDKCQLNQHRPVPFRLTPNVGEFITHFGITGPLSAAIVATARCFIQPNYKLSSILQTILRDEIIALQKKGFRECKLIEGSEDRYSDGNCMEHSVNIVNSAVDIIMTRFNKISYFDSIENKKISVLVQSATNIDNLCRMDPAWHPWL.

HEAT repeat units follow at residues 98–136 (RQHVKTIITMMLKILKTDNEENVLVCLRIIIELHKHFRP), 335–381 (TDLR…HVRQ), 740–778 (DLLYQEFLPLLPNLLEGLNRLQSGFHKQHMRDLFVELCL), 1185–1223 (AKATYEVIHELVRHITSPNTIVREESMVLLKHIGTIQSK), 1332–1370 (IGYKEKIINIIFKVMESDKSELQTTAFHCMKHFITGVTL), and 1826–1864 (AIHKKIVLQVFHSLLKGHALEARSIVKQALDVLTPAMPL). The FAT domain maps to 2610–3173 (LLAYLGKSHN…YFPIRTLYLT (564 aa)). The region spanning 3429–3753 (MPRVEIVQKN…AVDIIMTRFN (325 aa)) is the PI3K/PI4K catalytic domain. The segment at 3435–3441 (VQKNNTA) is G-loop. Positions 3616–3624 (NLTRLNADM) are catalytic loop. The segment at 3636–3661 (ISYFKFDVNDDKCQLNQHRPVPFRLT) is activation loop. The 33-residue stretch at 3758-3790 (FDSIENKKISVLVQSATNIDNLCRMDPAWHPWL) folds into the FATC domain.

Belongs to the PI3/PI4-kinase family. TRA1 subfamily. As to quaternary structure, component of the Tip60 chromatin-remodeling complex which contains the catalytic subunit Tip60 and the subunits Domino, Tra1, Brd8, E(Pc), DMAP1, Pontin, Reptin, Ing3, Act87E, BAP55, Mrg15, MrgBP, Gas41 and YL-1. Probable component of some SAGA complex. Interacts with Spt3, Gcn5, Ada3 and Ada2b. As to expression, ubiquitous.

It is found in the nucleus. It localises to the cytoplasm. The protein localises to the chromosome. Its function is as follows. Part of the Tip60 chromatin-remodeling complex which is involved in DNA repair. Upon induction of DNA double-strand breaks, this complex acetylates phosphorylated H2AV in nucleosomes and exchanges it with unmodified H2AV. During wing development, required for activity of Notch and its coactivator mam. Function in promoting mam function is likely to involve both the Tip60 and SAGA complexes. In Drosophila melanogaster (Fruit fly), this protein is Transcription-associated protein 1 (Nipped-A).